Reading from the N-terminus, the 136-residue chain is Large ribosomal subunit protein uL16 (136 aa).

This sequence belongs to the universal ribosomal protein uL16 family. Part of the 50S ribosomal subunit.

Functionally, binds 23S rRNA and is also seen to make contacts with the A and possibly P site tRNAs. The protein is Large ribosomal subunit protein uL16 of Vibrio vulnificus (strain YJ016).